The following is a 134-amino-acid chain: U34-theraphotoxin-Cg1a (134 aa).

An N-terminal signal peptide occupies residues 1 to 19 (MKLAVVFLLTTVVFTLAQS). Disulfide bonds link C24–C35, C29–C53, and C63–C84. The tract at residues 97-134 (EQSSTSTSSTQGPITSSTVTTQSEATTETETTTAAEGK) is disordered. The span at 99 to 134 (SSTSTSSTQGPITSSTVTTQSEATTETETTTAAEGK) shows a compositional bias: low complexity.

Belongs to the neurotoxin 32 family. In terms of tissue distribution, expressed by the venom gland.

Its subcellular location is the secreted. The polypeptide is U34-theraphotoxin-Cg1a (Chilobrachys guangxiensis (Chinese earth tiger tarantula)).